Here is a 309-residue protein sequence, read N- to C-terminus: Probable manganese-dependent inorganic pyrophosphatase (309 aa).

Mn(2+) is bound by residues H9, D13, D15, D75, H97, and D149.

The protein belongs to the PPase class C family. It depends on Mn(2+) as a cofactor.

The protein localises to the cytoplasm. It carries out the reaction diphosphate + H2O = 2 phosphate + H(+). In Bacillus cereus (strain B4264), this protein is Probable manganese-dependent inorganic pyrophosphatase.